The chain runs to 387 residues: Polyphosphate kinase (387 aa).

Arginine 347 and arginine 377 together coordinate Mg(2+).

The protein belongs to the polyphosphate kinase 1 (PPK1) family. The cofactor is Mg(2+). In terms of processing, an intermediate of this reaction is the autophosphorylated ppk in which a phosphate is covalently linked to a histidine residue through a N-P bond.

The enzyme catalyses [phosphate](n) + ATP = [phosphate](n+1) + ADP. Its function is as follows. Catalyzes the reversible transfer of the terminal phosphate of ATP to form a long-chain polyphosphate (polyP). The polypeptide is Polyphosphate kinase (ppk) (Aphanizomenon baltica).